The chain runs to 642 residues: Threonine--tRNA ligase (642 aa).

The TGS domain maps to 1–61 (MPVITLPDGS…DADATVAIIT (61 aa)). The tract at residues 243–534 (DHRKIGKQLD…LTEEFAGFFP (292 aa)) is catalytic. Zn(2+) contacts are provided by Cys-334, His-385, and His-511.

The protein belongs to the class-II aminoacyl-tRNA synthetase family. Homodimer. Zn(2+) is required as a cofactor.

It is found in the cytoplasm. The enzyme catalyses tRNA(Thr) + L-threonine + ATP = L-threonyl-tRNA(Thr) + AMP + diphosphate + H(+). In terms of biological role, catalyzes the attachment of threonine to tRNA(Thr) in a two-step reaction: L-threonine is first activated by ATP to form Thr-AMP and then transferred to the acceptor end of tRNA(Thr). Also edits incorrectly charged L-seryl-tRNA(Thr). The polypeptide is Threonine--tRNA ligase (Edwardsiella ictaluri (strain 93-146)).